A 454-amino-acid polypeptide reads, in one-letter code: Phosphoglucosamine mutase (454 aa).

The active-site Phosphoserine intermediate is the Ser104. Mg(2+) is bound by residues Ser104, Asp247, Asp249, and Asp251. Ser104 bears the Phosphoserine mark.

Belongs to the phosphohexose mutase family. Mg(2+) serves as cofactor. Activated by phosphorylation.

It catalyses the reaction alpha-D-glucosamine 1-phosphate = D-glucosamine 6-phosphate. In terms of biological role, catalyzes the conversion of glucosamine-6-phosphate to glucosamine-1-phosphate. The chain is Phosphoglucosamine mutase from Bifidobacterium animalis subsp. lactis (strain AD011).